A 197-amino-acid chain; its full sequence is uncharacterized protein (197 aa).

Residues 1-23 form the signal peptide; it reads MSARAPKELRLALPPCLLNRTFA. 2 N-linked (GlcNAc...) asparagine glycosylation sites follow: Asn-19 and Asn-26. Residues 24 to 61 lie on the Extracellular side of the membrane; sequence SPNASGSGNTGARGPGAGGSGTCITQVGQQLFQSFSST. A helical membrane pass occupies residues 62–82; the sequence is LVLIVLVTLIFCLIVLSLSTF. At 83–197 the chain is on the cytoplasmic side; sequence HIHKRRMKKR…EGLLQTVVLS (115 aa). The disordered stretch occupies residues 94-180; that stretch reads MQRAQEEYER…SSPQGAHAAS (87 aa). Composition is skewed to basic and acidic residues over residues 96 to 107 and 125 to 136; these read RAQEEYERDHCS and HTKETRLERQPR. Residues 147–161 show a composition bias toward low complexity; the sequence is SSSSSSSPGLLCQGP. Positions 162 to 171 are enriched in pro residues; sequence CAPPPPPPAS.

Its subcellular location is the membrane. This is an uncharacterized protein from Macaca fascicularis (Crab-eating macaque).